The following is a 76-amino-acid chain: Exodeoxyribonuclease 7 small subunit (76 aa).

It belongs to the XseB family. Heterooligomer composed of large and small subunits.

The protein localises to the cytoplasm. The enzyme catalyses Exonucleolytic cleavage in either 5'- to 3'- or 3'- to 5'-direction to yield nucleoside 5'-phosphates.. In terms of biological role, bidirectionally degrades single-stranded DNA into large acid-insoluble oligonucleotides, which are then degraded further into small acid-soluble oligonucleotides. This Methylococcus capsulatus (strain ATCC 33009 / NCIMB 11132 / Bath) protein is Exodeoxyribonuclease 7 small subunit.